The sequence spans 484 residues: Glycogen synthase (484 aa).

ADP-alpha-D-glucose is bound at residue Lys-15.

It belongs to the glycosyltransferase 1 family. Bacterial/plant glycogen synthase subfamily.

It catalyses the reaction [(1-&gt;4)-alpha-D-glucosyl](n) + ADP-alpha-D-glucose = [(1-&gt;4)-alpha-D-glucosyl](n+1) + ADP + H(+). It participates in glycan biosynthesis; glycogen biosynthesis. Functionally, synthesizes alpha-1,4-glucan chains using ADP-glucose. This chain is Glycogen synthase, found in Geotalea uraniireducens (strain Rf4) (Geobacter uraniireducens).